The chain runs to 384 residues: Galactokinase (384 aa).

35-38 is a substrate binding site; sequence EHTD. ATP contacts are provided by residues Ser69 and 125-131; that span reads GAGLSSS. Mg(2+)-binding residues include Ser131 and Glu163. Catalysis depends on Asp175, which acts as the Proton acceptor. A substrate-binding site is contributed by Tyr224.

This sequence belongs to the GHMP kinase family. GalK subfamily.

The protein localises to the cytoplasm. It carries out the reaction alpha-D-galactose + ATP = alpha-D-galactose 1-phosphate + ADP + H(+). It functions in the pathway carbohydrate metabolism; galactose metabolism. In terms of biological role, catalyzes the transfer of the gamma-phosphate of ATP to D-galactose to form alpha-D-galactose-1-phosphate (Gal-1-P). In Aliivibrio fischeri (strain ATCC 700601 / ES114) (Vibrio fischeri), this protein is Galactokinase.